Reading from the N-terminus, the 412-residue chain is MIIELDEFTRVEGNGKAEIVIENGEVKDARVKIVEGPRFFEILTLGRDYWDVPDLEARICAICYIAHSVASVRAIEKALGIDVPESVEKLRELALWGEIIESHALHLYLLALPDVFGYPDAISMIPRHGELVKEGLTIKAFGNAIRELIGGREIHGINIKPGGFGRYPSEEELEKIAEHSKSLIKFARRIVGIFASQEAGGAVGEVLMATSDYLWGDELIINGERVQYYEVDEVPVGYSFAKHSYYKGNPVFVGALPRLLLKGESIEGEAARMLEEYRDKLESKYVIYNNLAQAIELLYALERVPQLVEEILSEGIERGNGEISQESGEGVGYVEAPRGVLVHHYRIENGKVVWSNTITPTAFNQRLMELSLLEEAKRLYGSESEENMKKRLEVIVRAFDPCISCSVHFVKL.

The Ni(2+) site is built by Cys-60, Cys-63, Cys-402, and Cys-405. Cys-63 contributes to the Fe cation binding site. Fe cation is bound at residue Cys-405.

This sequence belongs to the [NiFe]/[NiFeSe] hydrogenase large subunit family. As to quaternary structure, dimer of heterotetramer of alpha, beta, gamma and delta subunits. The nickel-containing alpha and delta subunits constitute the hydrogenase activity. The beta and gamma subunits (flavin-containing dimer) constitute the sulfur reductase activity. Requires Ni(2+) as cofactor. Fe cation serves as cofactor.

The protein resides in the cytoplasm. It catalyses the reaction H2 + NADP(+) = NADPH + H(+). The catalysed reaction is H2 + NAD(+) = NADH + H(+). Functionally, part of a bifunctional enzyme complex that functions as a hydrogen-evolving hydrogenase with sulfur-reducing activity. May play a role in hydrogen cycling during fermentative growth. Activity exhibited with NAD in addition to NADPH. The alpha and delta subunits form the hydrogenase component that catalyzes the reduction of protons to evolve hydrogen. This chain is Sulfhydrogenase 2 subunit alpha, found in Pyrococcus furiosus (strain ATCC 43587 / DSM 3638 / JCM 8422 / Vc1).